The following is a 251-amino-acid chain: UPF0246 protein TM1040_2658 (251 aa).

It belongs to the UPF0246 family.

This is UPF0246 protein TM1040_2658 from Ruegeria sp. (strain TM1040) (Silicibacter sp.).